Here is a 403-residue protein sequence, read N- to C-terminus: Cytochrome P450-SU2 (403 aa).

Positions 1–24 (MTTAERTAPPDALTVPASRAPGCP) are disordered. Cysteine 352 is a binding site for heme.

It belongs to the cytochrome P450 family. Heme is required as a cofactor.

In terms of biological role, metabolism of a number of sulfonylurea herbicides. The protein is Cytochrome P450-SU2 (cyp105B1) of Streptomyces griseolus.